The sequence spans 427 residues: MGKTIAEKIFASHLVDEPFAGTKVLRLDVVMCHEITTPIAIADLMARGKDRVFDPTKIKAVIDHVTPSKDSKTATQAKMLRDWARRHGIVDFFDVGANGVCHALFPEKGFIRPGYTVIMGDSHTCTHGAFGAFAAGIGTTDLEVGILKGVCAFREPKTIRINLNGSLPEGVYAKDVILHVIGRIGVNGATDRVMEFRGSVVDTMTMESRMTLCNMAIEAGGTSGICMPDMVTVDYLWPFLKDEYQSREAALAAFSLWRSDEDAVYEQVLDFDVSSLEPIVTFGYKPDQVKPVSEIAGTPVDQVYLGSCTNGRLEDLRIAARILKGKKIAPTVRGILSPATPKIYQDAMREGLIDIFMEAGFCVTNPTCGACLGMSNGVLAEGEVCASTTNRNFMGRMGKGGMVHLMSPATSAATAIEGKIADPRKYL.

Residues C308, C368, and C371 each contribute to the [4Fe-4S] cluster site.

This sequence belongs to the aconitase/IPM isomerase family. LeuC type 2 subfamily. As to quaternary structure, heterodimer of LeuC and LeuD. [4Fe-4S] cluster serves as cofactor.

The catalysed reaction is (2R,3S)-3-isopropylmalate = (2S)-2-isopropylmalate. It functions in the pathway amino-acid biosynthesis; L-leucine biosynthesis; L-leucine from 3-methyl-2-oxobutanoate: step 2/4. Functionally, catalyzes the isomerization between 2-isopropylmalate and 3-isopropylmalate, via the formation of 2-isopropylmaleate. In Geobacter sulfurreducens (strain ATCC 51573 / DSM 12127 / PCA), this protein is 3-isopropylmalate dehydratase large subunit.